The following is a 360-amino-acid chain: UPF0283 membrane protein Oant_2119 (360 aa).

Positions 1–30 are disordered; the sequence is MTEKTPRKPASFTVSQASNRPEAADEAPRR. Helical transmembrane passes span 77–97 and 108–128; these read ILFG…TEDL and LGWT…AIVV.

This sequence belongs to the UPF0283 family.

It is found in the cell inner membrane. This chain is UPF0283 membrane protein Oant_2119, found in Brucella anthropi (strain ATCC 49188 / DSM 6882 / CCUG 24695 / JCM 21032 / LMG 3331 / NBRC 15819 / NCTC 12168 / Alc 37) (Ochrobactrum anthropi).